The primary structure comprises 73 residues: UPF0435 protein lin1819 (73 aa).

It belongs to the UPF0435 family.

This is UPF0435 protein lin1819 from Listeria innocua serovar 6a (strain ATCC BAA-680 / CLIP 11262).